The sequence spans 125 residues: Ribosome-binding factor A (125 aa).

It belongs to the RbfA family. In terms of assembly, monomer. Binds 30S ribosomal subunits, but not 50S ribosomal subunits or 70S ribosomes.

Its subcellular location is the cytoplasm. One of several proteins that assist in the late maturation steps of the functional core of the 30S ribosomal subunit. Associates with free 30S ribosomal subunits (but not with 30S subunits that are part of 70S ribosomes or polysomes). Required for efficient processing of 16S rRNA. May interact with the 5'-terminal helix region of 16S rRNA. This chain is Ribosome-binding factor A, found in Kosmotoga olearia (strain ATCC BAA-1733 / DSM 21960 / TBF 19.5.1).